We begin with the raw amino-acid sequence, 134 residues long: Lymphocyte antigen 6I (134 aa).

Residues 1 to 21 (MDTSHAIKSCVLILLVTLLCA) form the signal peptide. Residues 27–105 (LECYQCYGVP…ISCCQEDLCN (79 aa)) form the UPAR/Ly6 domain. Intrachain disulfides connect C29/C53, C32/C41, C46/C74, C78/C98, and C99/C104. N-linked (GlcNAc...) asparagine glycosylation is present at N95. G112 carries the GPI-anchor amidated glycine lipid modification. Positions 113–134 (SSWTTAGVLLFSLGSVLLQTLM) are cleaved as a propeptide — removed in mature form.

As to expression, expressed in hematopoietic tissue (spleen, thymus, bone marrow). Also found in peritoneal macrophages, peripheral blood leukocytes, liver, heart, brain, kidney and lung.

It is found in the cell membrane. The protein is Lymphocyte antigen 6I (Ly6i) of Mus musculus (Mouse).